Reading from the N-terminus, the 550-residue chain is Dihydroxy-acid dehydratase (550 aa).

Mg(2+) is bound at residue Asp-78. Residue Cys-119 participates in [2Fe-2S] cluster binding. Residues Asp-120 and Lys-121 each contribute to the Mg(2+) site. Lys-121 bears the N6-carboxylysine mark. [2Fe-2S] cluster is bound at residue Cys-191. Glu-440 serves as a coordination point for Mg(2+). Ser-466 functions as the Proton acceptor in the catalytic mechanism.

Belongs to the IlvD/Edd family. In terms of assembly, homodimer. It depends on [2Fe-2S] cluster as a cofactor. Mg(2+) is required as a cofactor.

The catalysed reaction is (2R)-2,3-dihydroxy-3-methylbutanoate = 3-methyl-2-oxobutanoate + H2O. It catalyses the reaction (2R,3R)-2,3-dihydroxy-3-methylpentanoate = (S)-3-methyl-2-oxopentanoate + H2O. The protein operates within amino-acid biosynthesis; L-isoleucine biosynthesis; L-isoleucine from 2-oxobutanoate: step 3/4. It participates in amino-acid biosynthesis; L-valine biosynthesis; L-valine from pyruvate: step 3/4. Functionally, functions in the biosynthesis of branched-chain amino acids. Catalyzes the dehydration of (2R,3R)-2,3-dihydroxy-3-methylpentanoate (2,3-dihydroxy-3-methylvalerate) into 2-oxo-3-methylpentanoate (2-oxo-3-methylvalerate) and of (2R)-2,3-dihydroxy-3-methylbutanoate (2,3-dihydroxyisovalerate) into 2-oxo-3-methylbutanoate (2-oxoisovalerate), the penultimate precursor to L-isoleucine and L-valine, respectively. The protein is Dihydroxy-acid dehydratase of Methanococcus maripaludis (strain C5 / ATCC BAA-1333).